The following is a 138-amino-acid chain: Cysteine desulfuration protein SufE (138 aa).

Residue Cys-51 is the Cysteine persulfide intermediate of the active site.

Belongs to the SufE family. As to quaternary structure, homodimer. Interacts with SufS.

It is found in the cytoplasm. It participates in cofactor biosynthesis; iron-sulfur cluster biosynthesis. Functionally, participates in cysteine desulfuration mediated by SufS. Cysteine desulfuration mobilizes sulfur from L-cysteine to yield L-alanine and constitutes an essential step in sulfur metabolism for biosynthesis of a variety of sulfur-containing biomolecules. Functions as a sulfur acceptor for SufS, by mediating the direct transfer of the sulfur atom from the S-sulfanylcysteine of SufS, an intermediate product of cysteine desulfuration process. This is Cysteine desulfuration protein SufE from Escherichia coli O17:K52:H18 (strain UMN026 / ExPEC).